Here is a 401-residue protein sequence, read N- to C-terminus: Argininosuccinate synthase (401 aa).

8 to 16 (AYSGGLDTS) contacts ATP. Tyr85 serves as a coordination point for L-citrulline. Gly115 lines the ATP pocket. Thr117, Asn121, and Asp122 together coordinate L-aspartate. Residue Asn121 coordinates L-citrulline. Arg125, Ser173, Ser182, Glu258, and Tyr270 together coordinate L-citrulline.

It belongs to the argininosuccinate synthase family. Type 1 subfamily. In terms of assembly, homotetramer.

Its subcellular location is the cytoplasm. It catalyses the reaction L-citrulline + L-aspartate + ATP = 2-(N(omega)-L-arginino)succinate + AMP + diphosphate + H(+). It functions in the pathway amino-acid biosynthesis; L-arginine biosynthesis; L-arginine from L-ornithine and carbamoyl phosphate: step 2/3. The sequence is that of Argininosuccinate synthase from Staphylococcus saprophyticus subsp. saprophyticus (strain ATCC 15305 / DSM 20229 / NCIMB 8711 / NCTC 7292 / S-41).